Consider the following 592-residue polypeptide: Cyclin-dependent kinase-like 3 (592 aa).

Positions Y4–F286 constitute a Protein kinase domain. Residues V10–V18 and K33 each bind ATP. Positions N44 to E50 match the [NKR]KIAxRE motif. D125 acts as the Proton acceptor in catalysis. T158 is subject to Phosphothreonine. Phosphotyrosine is present on Y160. Positions G368–E379 are enriched in basic and acidic residues. Disordered regions lie at residues G368–N390 and R459–I485. Positions S466–S477 are enriched in polar residues.

The protein belongs to the protein kinase superfamily. CMGC Ser/Thr protein kinase family. CDC2/CDKX subfamily.

The protein resides in the cytoplasm. The enzyme catalyses L-seryl-[protein] + ATP = O-phospho-L-seryl-[protein] + ADP + H(+). The catalysed reaction is L-threonyl-[protein] + ATP = O-phospho-L-threonyl-[protein] + ADP + H(+). This is Cyclin-dependent kinase-like 3 from Homo sapiens (Human).